The primary structure comprises 279 residues: Proteasome subunit beta (279 aa).

Residues 1–56 (MASQAMSWRGEGERVVRDLAAASTSSFVEHLSQSRPDLLPFGQALPAGVLPQTPHA) constitute a propeptide, removed in mature form; by autocatalysis. Thr-57 (nucleophile) is an active-site residue.

The protein belongs to the peptidase T1B family. In terms of assembly, the 20S proteasome core is composed of 14 alpha and 14 beta subunits that assemble into four stacked heptameric rings, resulting in a barrel-shaped structure. The two inner rings, each composed of seven catalytic beta subunits, are sandwiched by two outer rings, each composed of seven alpha subunits. The catalytic chamber with the active sites is on the inside of the barrel. Has a gated structure, the ends of the cylinder being occluded by the N-termini of the alpha-subunits. Is capped by the proteasome-associated ATPase, ARC.

Its subcellular location is the cytoplasm. It carries out the reaction Cleavage of peptide bonds with very broad specificity.. Its pathway is protein degradation; proteasomal Pup-dependent pathway. With respect to regulation, the formation of the proteasomal ATPase ARC-20S proteasome complex, likely via the docking of the C-termini of ARC into the intersubunit pockets in the alpha-rings, may trigger opening of the gate for substrate entry. Interconversion between the open-gate and close-gate conformations leads to a dynamic regulation of the 20S proteasome proteolysis activity. Component of the proteasome core, a large protease complex with broad specificity involved in protein degradation. The protein is Proteasome subunit beta of Renibacterium salmoninarum (strain ATCC 33209 / DSM 20767 / JCM 11484 / NBRC 15589 / NCIMB 2235).